The chain runs to 77 residues: Probable [Fe-S]-dependent transcriptional repressor (77 aa).

The iron-sulfur cluster site is built by Cys-54, Cys-59, Cys-62, and Cys-68.

Belongs to the FeoC family.

May function as a transcriptional regulator that controls feoABC expression. This chain is Probable [Fe-S]-dependent transcriptional repressor, found in Proteus mirabilis (strain HI4320).